The following is a 282-amino-acid chain: Probable endonuclease 4 (282 aa).

Zn(2+) contacts are provided by H70, H110, E146, D180, H183, H217, D230, H232, and E262.

It belongs to the AP endonuclease 2 family. Zn(2+) serves as cofactor.

The catalysed reaction is Endonucleolytic cleavage to 5'-phosphooligonucleotide end-products.. Its function is as follows. Endonuclease IV plays a role in DNA repair. It cleaves phosphodiester bonds at apurinic or apyrimidinic (AP) sites, generating a 3'-hydroxyl group and a 5'-terminal sugar phosphate. The sequence is that of Probable endonuclease 4 from Wolinella succinogenes (strain ATCC 29543 / DSM 1740 / CCUG 13145 / JCM 31913 / LMG 7466 / NCTC 11488 / FDC 602W) (Vibrio succinogenes).